The sequence spans 565 residues: NAD-dependent malic enzyme (565 aa).

Tyr104 (proton donor) is an active-site residue. Position 157 (Arg157) interacts with NAD(+). Lys175 acts as the Proton acceptor in catalysis. A divalent metal cation contacts are provided by Glu246, Asp247, and Asp270. NAD(+)-binding residues include Asp270 and Asn418.

Belongs to the malic enzymes family. Homotetramer. The cofactor is Mg(2+). Mn(2+) serves as cofactor.

It catalyses the reaction (S)-malate + NAD(+) = pyruvate + CO2 + NADH. The catalysed reaction is oxaloacetate + H(+) = pyruvate + CO2. In Shigella sonnei (strain Ss046), this protein is NAD-dependent malic enzyme.